A 331-amino-acid polypeptide reads, in one-letter code: Doxorubicin resistance ATP-binding protein DrrA (331 aa).

The ABC transporter domain maps to 8–240 (VVVNGVRKTY…AGDTFCEIVP (233 aa)). Residue 42-49 (GPNGAGKT) coordinates ATP.

Belongs to the ABC transporter superfamily. Drug exporter-1 (DrugE1) (TC 3.A.1.105) family. In terms of assembly, the complex is composed of two ATP-binding proteins (DrrA) and two transmembrane proteins (DrrB and DrrC).

It is found in the cell membrane. In terms of biological role, part of the ABC transporter complex DrrABC involved in doxorubicin resistance. Responsible for energy coupling to the transport system. Binds ATP. The sequence is that of Doxorubicin resistance ATP-binding protein DrrA (drrA) from Mycobacterium tuberculosis (strain CDC 1551 / Oshkosh).